A 524-amino-acid polypeptide reads, in one-letter code: Germ cell-less protein-like 1 (524 aa).

The tract at residues 1–37 (MGALSSRVLRPAGRTEQPEPTPGAGGAARRSDAGEDA) is disordered. The short motif at 47-53 (GRKRKRS) is the Nuclear localization signal element. The segment at 63–83 (DSETDDDEDEGDEQQRLLNTP) is disordered. Phosphoserine is present on Ser-64. Residues 65-74 (ETDDDEDEGD) are compositionally biased toward acidic residues. Position 66 is a phosphothreonine (Thr-66). The Nuclear localization signal signature appears at 83 to 89 (PRRKKLK). The 71-residue stretch at 106–176 (SDIKICALGE…LYRDDVLIKP (71 aa)) folds into the BTB domain.

Interacts with TMPO-Beta, TSG101 and TFDP2. Interacts with EMD. As to expression, ubiquitously expressed at low levels throughout development and in adult tissues.

Its subcellular location is the nucleus matrix. Possible function in spermatogenesis. Enhances the degradation of MDM2 and increases the amount of p53 probably by modulating the nucleocytoplasmic transport. In Mus musculus (Mouse), this protein is Germ cell-less protein-like 1 (Gmcl1).